Reading from the N-terminus, the 212-residue chain is Fe/S biogenesis protein NfuA (212 aa).

2 residues coordinate [4Fe-4S] cluster: Cys169 and Cys172.

Belongs to the NfuA family. As to quaternary structure, homodimer. The cofactor is [4Fe-4S] cluster.

Involved in iron-sulfur cluster biogenesis. Binds a 4Fe-4S cluster, can transfer this cluster to apoproteins, and thereby intervenes in the maturation of Fe/S proteins. Could also act as a scaffold/chaperone for damaged Fe/S proteins. In Acinetobacter baumannii (strain AB307-0294), this protein is Fe/S biogenesis protein NfuA.